The sequence spans 312 residues: Ribosomal protein uL3 glutamine methyltransferase (312 aa).

It belongs to the protein N5-glutamine methyltransferase family. PrmB subfamily.

It carries out the reaction L-glutaminyl-[ribosomal protein uL3] + S-adenosyl-L-methionine = N(5)-methyl-L-glutaminyl-[ribosomal protein uL3] + S-adenosyl-L-homocysteine + H(+). Functionally, methylates large ribosomal subunit protein uL3 on a specific glutamine residue. The protein is Ribosomal protein uL3 glutamine methyltransferase of Xylella fastidiosa (strain Temecula1 / ATCC 700964).